Consider the following 483-residue polypeptide: tRNA sulfurtransferase (483 aa).

Residues 61 to 165 (AEVLEILTTT…DELLNQVIAR (105 aa)) enclose the THUMP domain. ATP is bound by residues 183 to 184 (LI), K265, G287, and Q296. A disulfide bond links C344 and C457. Positions 405 to 483 (EEGNAVVLDI…GFNNVKVYRP (79 aa)) constitute a Rhodanese domain. The Cysteine persulfide intermediate role is filled by C457.

Belongs to the ThiI family.

It localises to the cytoplasm. It catalyses the reaction [ThiI sulfur-carrier protein]-S-sulfanyl-L-cysteine + a uridine in tRNA + 2 reduced [2Fe-2S]-[ferredoxin] + ATP + H(+) = [ThiI sulfur-carrier protein]-L-cysteine + a 4-thiouridine in tRNA + 2 oxidized [2Fe-2S]-[ferredoxin] + AMP + diphosphate. The catalysed reaction is [ThiS sulfur-carrier protein]-C-terminal Gly-Gly-AMP + S-sulfanyl-L-cysteinyl-[cysteine desulfurase] + AH2 = [ThiS sulfur-carrier protein]-C-terminal-Gly-aminoethanethioate + L-cysteinyl-[cysteine desulfurase] + A + AMP + 2 H(+). Its pathway is cofactor biosynthesis; thiamine diphosphate biosynthesis. Catalyzes the ATP-dependent transfer of a sulfur to tRNA to produce 4-thiouridine in position 8 of tRNAs, which functions as a near-UV photosensor. Also catalyzes the transfer of sulfur to the sulfur carrier protein ThiS, forming ThiS-thiocarboxylate. This is a step in the synthesis of thiazole, in the thiamine biosynthesis pathway. The sulfur is donated as persulfide by IscS. This Vibrio cholerae serotype O1 (strain ATCC 39315 / El Tor Inaba N16961) protein is tRNA sulfurtransferase.